The chain runs to 118 residues: Small ribosomal subunit protein uS13 (118 aa).

A disordered region spans residues 94–118; sequence SLPLRGQRTKTNARTRKGPRKPIRK.

It belongs to the universal ribosomal protein uS13 family. As to quaternary structure, part of the 30S ribosomal subunit. Forms a loose heterodimer with protein S19. Forms two bridges to the 50S subunit in the 70S ribosome.

Located at the top of the head of the 30S subunit, it contacts several helices of the 16S rRNA. In the 70S ribosome it contacts the 23S rRNA (bridge B1a) and protein L5 of the 50S subunit (bridge B1b), connecting the 2 subunits; these bridges are implicated in subunit movement. Contacts the tRNAs in the A and P-sites. In Shewanella woodyi (strain ATCC 51908 / MS32), this protein is Small ribosomal subunit protein uS13.